The primary structure comprises 223 residues: Cytidylate kinase (223 aa).

Residue 17-25 (GPTASGKGT) participates in ATP binding.

It belongs to the cytidylate kinase family. Type 1 subfamily.

It localises to the cytoplasm. The enzyme catalyses CMP + ATP = CDP + ADP. The catalysed reaction is dCMP + ATP = dCDP + ADP. The chain is Cytidylate kinase from Bordetella bronchiseptica (strain ATCC BAA-588 / NCTC 13252 / RB50) (Alcaligenes bronchisepticus).